Reading from the N-terminus, the 266-residue chain is Interleukin-1 beta (266 aa).

A propeptide spanning residues 1–113 is cleaved from the precursor; that stretch reads MATVPEPINE…ETSSDELLCD (113 aa).

It belongs to the IL-1 family. In terms of assembly, monomer. In its precursor form, weakly interacts with full-length MEFV; the mature cytokine does not interact at all. Interacts with integrins ITGAV:ITGBV and ITGA5:ITGB1; integrin-binding is required for IL1B signaling. Interacts with cargo receptor TMED10; the interaction is direct and is required for the secretion of IL1B mature form. Interacts with HSP90AB1; the interaction facilitates cargo translocation into the ERGIC. Interacts with HSP90B1; the interaction facilitates cargo translocation into the ERGIC.

It localises to the cytoplasm. The protein localises to the cytosol. The protein resides in the secreted. Its subcellular location is the lysosome. It is found in the extracellular exosome. Its function is as follows. Potent pro-inflammatory cytokine. Initially discovered as the major endogenous pyrogen, induces prostaglandin synthesis, neutrophil influx and activation, T-cell activation and cytokine production, B-cell activation and antibody production, and fibroblast proliferation and collagen production. Promotes Th17 differentiation of T-cells. Synergizes with IL12/interleukin-12 to induce IFNG synthesis from T-helper 1 (Th1) cells. Plays a role in angiogenesis by inducing VEGF production synergistically with TNF and IL6. Involved in transduction of inflammation downstream of pyroptosis: its mature form is specifically released in the extracellular milieu by passing through the gasdermin-D (GSDMD) pore. This Ovis aries (Sheep) protein is Interleukin-1 beta (IL1B).